The following is an 89-amino-acid chain: Small ribosomal subunit protein uS15 (89 aa).

This sequence belongs to the universal ribosomal protein uS15 family. As to quaternary structure, part of the 30S ribosomal subunit. Forms a bridge to the 50S subunit in the 70S ribosome, contacting the 23S rRNA.

Functionally, one of the primary rRNA binding proteins, it binds directly to 16S rRNA where it helps nucleate assembly of the platform of the 30S subunit by binding and bridging several RNA helices of the 16S rRNA. Forms an intersubunit bridge (bridge B4) with the 23S rRNA of the 50S subunit in the ribosome. The protein is Small ribosomal subunit protein uS15 of Neisseria gonorrhoeae (strain ATCC 700825 / FA 1090).